Reading from the N-terminus, the 859-residue chain is Leucine--tRNA ligase (859 aa).

Positions 42 to 52 (PYPSGRLHMGH) match the 'HIGH' region motif. Positions 618–622 (KMSKS) match the 'KMSKS' region motif. ATP is bound at residue lysine 621.

This sequence belongs to the class-I aminoacyl-tRNA synthetase family.

Its subcellular location is the cytoplasm. It carries out the reaction tRNA(Leu) + L-leucine + ATP = L-leucyl-tRNA(Leu) + AMP + diphosphate. The sequence is that of Leucine--tRNA ligase from Shewanella woodyi (strain ATCC 51908 / MS32).